Consider the following 1019-residue polypeptide: Photoactivated adenylate cyclase subunit alpha (1019 aa).

One can recognise a BLUF 1 domain in the interval 55–148 (LRRLMYLSAS…GRMYGEWHMK (94 aa)). The region spanning 204 to 332 (VVTFIYLVEF…DCINTASRIT (129 aa)) is the Guanylate cyclase 1 domain. The BLUF 2 domain occupies 467–559 (LITLTYISQA…RVYGSPLDMT (93 aa)). A Guanylate cyclase 2 domain is found at 615-744 (VMLATDICSF…EVSARVMEVE (130 aa)). Residues 822–861 (GTNAPGRGAPAGGIPSSPKVRPPGRTNSVSSYTPDPNEAL) are disordered. Positions 825-839 (APGRGAPAGGIPSSP) are enriched in low complexity. Over residues 846 to 855 (RTNSVSSYTP) the composition is skewed to polar residues.

This sequence belongs to the adenylyl cyclase class-4/guanylyl cyclase family. As to quaternary structure, heterotetramer of two alpha and two beta subunits. Requires FAD as cofactor.

It is found in the cell projection. It localises to the cilium. The protein resides in the flagellum. The enzyme catalyses ATP = 3',5'-cyclic AMP + diphosphate. Its activity is regulated as follows. Activity increased by up to 80-fold under blue light. Acts as a blue light photoreceptor for the step-up photophobic response. Mediates photoavoidance. This chain is Photoactivated adenylate cyclase subunit alpha, found in Euglena gracilis.